Reading from the N-terminus, the 96-residue chain is NADH-ubiquinone oxidoreductase chain 4L (96 aa).

Helical transmembrane passes span 1–21 (MNPT…AFYQ), 24–44 (LLSL…LMAI), and 57–77 (LPLI…VLLV).

This sequence belongs to the complex I subunit 4L family.

The protein resides in the mitochondrion membrane. It carries out the reaction a ubiquinone + NADH + 5 H(+)(in) = a ubiquinol + NAD(+) + 4 H(+)(out). Functionally, core subunit of the mitochondrial membrane respiratory chain NADH dehydrogenase (Complex I) which catalyzes electron transfer from NADH through the respiratory chain, using ubiquinone as an electron acceptor. Part of the enzyme membrane arm which is embedded in the lipid bilayer and involved in proton translocation. The polypeptide is NADH-ubiquinone oxidoreductase chain 4L (MT-ND4L) (Myxine glutinosa (Atlantic hagfish)).